The primary structure comprises 104 residues: MKDHEYHALTDAFFQYVEDTVDAGYPDIDCERAGGVLTLSFENKTKVIINKQEPLHQIWVATRENGFHFELQGETWIDNRFGHELKALLTKACTTQAGESVVFP.

Belongs to the frataxin family.

Involved in iron-sulfur (Fe-S) cluster assembly. May act as a regulator of Fe-S biogenesis. In Aeromonas salmonicida (strain A449), this protein is Iron-sulfur cluster assembly protein CyaY.